Reading from the N-terminus, the 369-residue chain is Probable dual-specificity RNA methyltransferase RlmN (369 aa).

The active-site Proton acceptor is the glutamate 108. The Radical SAM core domain occupies 114-352 (YPDRATLCIS…CTVRDTKGQE (239 aa)). An intrachain disulfide couples cysteine 121 to cysteine 357. Residues cysteine 128, cysteine 132, and cysteine 135 each contribute to the [4Fe-4S] cluster site. S-adenosyl-L-methionine is bound by residues 178-179 (GE), serine 212, 235-237 (SLH), and asparagine 314. Residue cysteine 357 is the S-methylcysteine intermediate of the active site.

It belongs to the radical SAM superfamily. RlmN family. [4Fe-4S] cluster is required as a cofactor.

Its subcellular location is the cytoplasm. It catalyses the reaction adenosine(2503) in 23S rRNA + 2 reduced [2Fe-2S]-[ferredoxin] + 2 S-adenosyl-L-methionine = 2-methyladenosine(2503) in 23S rRNA + 5'-deoxyadenosine + L-methionine + 2 oxidized [2Fe-2S]-[ferredoxin] + S-adenosyl-L-homocysteine. It carries out the reaction adenosine(37) in tRNA + 2 reduced [2Fe-2S]-[ferredoxin] + 2 S-adenosyl-L-methionine = 2-methyladenosine(37) in tRNA + 5'-deoxyadenosine + L-methionine + 2 oxidized [2Fe-2S]-[ferredoxin] + S-adenosyl-L-homocysteine. Its function is as follows. Specifically methylates position 2 of adenine 2503 in 23S rRNA and position 2 of adenine 37 in tRNAs. This is Probable dual-specificity RNA methyltransferase RlmN from Corynebacterium efficiens (strain DSM 44549 / YS-314 / AJ 12310 / JCM 11189 / NBRC 100395).